The sequence spans 902 residues: Tiger protein B1 (902 aa).

The N-terminal stretch at 1-24 (MKVIYIYLLLLLVCKFLFVKSSCS) is a signal peptide. The Extracellular portion of the chain corresponds to 25-803 (LKVGKIECTK…IIYSENKSTG (779 aa)). Asn-43, Asn-144, Asn-184, Asn-223, Asn-272, Asn-279, Asn-288, Asn-358, Asn-389, Asn-398, Asn-437, Asn-559, Asn-628, Asn-644, Asn-706, Asn-753, Asn-764, Asn-771, and Asn-799 each carry an N-linked (GlcNAc...) asparagine glycan. Positions 249 to 323 (MEGVLNDNGG…ITIDGEYKSN (75 aa)) constitute an IPT/TIG 1 domain. 2 IPT/TIG domains span residues 603-680 (PIIE…ISSS) and 704-788 (ITNT…IFQF). The chain crosses the membrane as a helical span at residues 804 to 824 (FPNEMYLGFVVFVIFIALISF). The Cytoplasmic segment spans residues 825-902 (AAKNQIEKYF…IRRCFKEHTD (78 aa)).

The protein localises to the cell membrane. In terms of biological role, tgrB1 and tgrC1 are involved in kin discrimination. They play an essential role in aggregation and subsequent development. The sequence is that of Tiger protein B1 (tgrB1) from Dictyostelium discoideum (Social amoeba).